We begin with the raw amino-acid sequence, 1043 residues long: RNA cytidine acetyltransferase (1043 aa).

ATP-binding positions include glycine 285–leucine 294 and arginine 462. Residues valine 551–asparagine 736 enclose the N-acetyltransferase domain. Acetyl-CoA is bound by residues valine 622–valine 624, glutamine 629–glycine 635, and arginine 723. A disordered region spans residues isoleucine 1020 to arginine 1043. Residues asparagine 1030–arginine 1043 show a composition bias toward basic residues.

Belongs to the RNA cytidine acetyltransferase family. NAT10 subfamily. In terms of assembly, part of the small subunit (SSU) processome, composed of more than 70 proteins and the RNA chaperone small nucleolar RNA (snoRNA) U3.

The protein localises to the nucleus. It localises to the nucleolus. It carries out the reaction a cytidine in 18S rRNA + acetyl-CoA + ATP + H2O = an N(4)-acetylcytidine in 18S rRNA + ADP + phosphate + CoA + H(+). It catalyses the reaction a cytidine in tRNA + acetyl-CoA + ATP + H2O = an N(4)-acetylcytidine in tRNA + ADP + phosphate + CoA + H(+). Its function is as follows. RNA cytidine acetyltransferase with specificity toward both 18S rRNA and tRNAs. Catalyzes the formation of N(4)-acetylcytidine (ac4C) in 18S rRNA. Required for early nucleolar cleavages of precursor rRNA at sites A0, A1 and A2 during 18S rRNA synthesis. Catalyzes the formation of ac4C in serine and leucine tRNAs. Requires a tRNA-binding adapter protein for full tRNA acetyltransferase activity but not for 18S rRNA acetylation. Part of the small subunit (SSU) processome, first precursor of the small eukaryotic ribosomal subunit. During the assembly of the SSU processome in the nucleolus, many ribosome biogenesis factors, an RNA chaperone and ribosomal proteins associate with the nascent pre-rRNA and work in concert to generate RNA folding, modifications, rearrangements and cleavage as well as targeted degradation of pre-ribosomal RNA by the RNA exosome. The chain is RNA cytidine acetyltransferase from Caenorhabditis elegans.